Here is a 445-residue protein sequence, read N- to C-terminus: MTTSTPNGHDLPARLLQALAPWRTASTWYVGFSGGLDSTVLLHLLAELAKRANLPALHAIHVHHGLQAIADAWPEHCRQVCQALGVAFESVRVKVEPGASVEQAARQARYAAFTERLGEGDVLLTGQHRDDQAETLLFRLLRGAGVRGLAAMPEQRRLGRGHLARPLLGVSRVELESYARRQGLRWVEDPSNDDQQFSRNFLRSQVLPLLTSIWPHATASLARTAGHLGEAQQLLDELAAQDVANAQATTPFSWLGLPVLNLGPIARLSGARQRNVMRHWLAPLTRLPDSDHWAGWEALRDAAQDARPLWRLADGALHRAQGCIWWLPAGWEQACSEAVNWADPRAPLDLPENGQVSLEGEAPLGDLSVRYRQGAEVMHLSGRGRRDLKRLLNEQAVPAFLRGRWPLLYRDDELLAVANLPGLDGSPNERWRLRWVAPTGDQSLS.

ATP is bound at residue 33 to 38 (SGGLDS).

Belongs to the tRNA(Ile)-lysidine synthase family.

The protein localises to the cytoplasm. It catalyses the reaction cytidine(34) in tRNA(Ile2) + L-lysine + ATP = lysidine(34) in tRNA(Ile2) + AMP + diphosphate + H(+). Its function is as follows. Ligates lysine onto the cytidine present at position 34 of the AUA codon-specific tRNA(Ile) that contains the anticodon CAU, in an ATP-dependent manner. Cytidine is converted to lysidine, thus changing the amino acid specificity of the tRNA from methionine to isoleucine. The sequence is that of tRNA(Ile)-lysidine synthase from Pseudomonas syringae pv. tomato (strain ATCC BAA-871 / DC3000).